The sequence spans 873 residues: Leucine--tRNA ligase (873 aa).

The 'HIGH' region signature appears at 48–58; sequence PYPSGKLHMGH. The 'KMSKS' region motif lies at 636–640; the sequence is KMSKS. Residue Lys-639 coordinates ATP.

The protein belongs to the class-I aminoacyl-tRNA synthetase family.

It localises to the cytoplasm. It catalyses the reaction tRNA(Leu) + L-leucine + ATP = L-leucyl-tRNA(Leu) + AMP + diphosphate. The chain is Leucine--tRNA ligase from Cupriavidus pinatubonensis (strain JMP 134 / LMG 1197) (Cupriavidus necator (strain JMP 134)).